Reading from the N-terminus, the 480-residue chain is DNA repair protein RadA (480 aa).

Residues 10-27 (CSECRHVSAKWVGRCLEC) form a C4-type zinc finger. 95–102 (GDPGVGKS) is an ATP binding site. The RadA KNRFG motif motif lies at 254–258 (KNRFG). Residues 353–480 (DIYLSTVGGM…TGHVPLGRGT (128 aa)) form a lon-protease-like region. Residues 459 to 480 (GTTLATPPSHSGTGHVPLGRGT) are disordered. Residues 461–470 (TLATPPSHSG) are compositionally biased toward polar residues.

It belongs to the RecA family. RadA subfamily.

Functionally, DNA-dependent ATPase involved in processing of recombination intermediates, plays a role in repairing DNA breaks. Stimulates the branch migration of RecA-mediated strand transfer reactions, allowing the 3' invading strand to extend heteroduplex DNA faster. Binds ssDNA in the presence of ADP but not other nucleotides, has ATPase activity that is stimulated by ssDNA and various branched DNA structures, but inhibited by SSB. Does not have RecA's homology-searching function. The protein is DNA repair protein RadA of Mycobacterium tuberculosis (strain CDC 1551 / Oshkosh).